Consider the following 396-residue polypeptide: L-lactate dehydrogenase (396 aa).

The FMN hydroxy acid dehydrogenase domain maps to 1–380 (MIISAASDYR…SRDSLVQELG (380 aa)). Y24 contributes to the substrate binding site. S106 and Q127 together coordinate FMN. Position 129 (Y129) interacts with substrate. Residue T155 coordinates FMN. R164 contributes to the substrate binding site. K251 is an FMN binding site. The active-site Proton acceptor is the H275. R278 contributes to the substrate binding site. Position 306–330 (306–330 (DSGIRNGLDVVRMIALGADSVLLGR)) interacts with FMN.

It belongs to the FMN-dependent alpha-hydroxy acid dehydrogenase family. FMN serves as cofactor.

It is found in the cell inner membrane. The enzyme catalyses (S)-lactate + A = pyruvate + AH2. Functionally, catalyzes the conversion of L-lactate to pyruvate. Is coupled to the respiratory chain. The polypeptide is L-lactate dehydrogenase (Citrobacter koseri (strain ATCC BAA-895 / CDC 4225-83 / SGSC4696)).